The following is an 850-amino-acid chain: Protein stoned-A (850 aa).

Residues 1-16 show a composition bias toward basic residues; the sequence is MLKLPKGLKKKKKKSK. Disordered stretches follow at residues 1 to 95 and 125 to 164; these read MLKL…AAGG and KESF…LGQI. Residues 26-290 form an interaction with Syt region; that stretch reads ELEQYKRDLK…QNLLLSESIE (265 aa). The segment covering 28–38 has biased composition (basic and acidic residues); it reads EQYKRDLKAKQ. Positions 78 to 91 are enriched in polar residues; that stretch reads ILNAQQQLSDQNQG. The span at 136–164 shows a compositional bias: basic and acidic residues; that stretch reads AEKKKQKEEEAARLEAEQQEREKQRLGQI. Positions 224 to 226 match the DPF 1 motif; it reads DPF. 2 disordered regions span residues 345-375 and 412-498; these read EEEE…EEDD and GSWA…PPFL. The segment covering 431–440 has biased composition (pro residues); it reads PPPPVRPPTG. Positions 451-462 are enriched in acidic residues; sequence SEDEEENPEDDP. Short sequence motifs (DPF) lie at residues 461 to 463 and 535 to 537; these read DPF. Disordered regions lie at residues 573–610, 634–673, 738–760, and 800–825; these read HSLS…QRKS, GNEL…TSHV, RKKL…FDTS, and LGLG…IDPF. 2 stretches are compositionally biased toward basic and acidic residues: residues 574–588 and 596–607; these read SLSD…DQKE and LEQKETDFDTAQ. 3 consecutive short sequence motifs (DPF) follow at residues 666 to 668, 755 to 757, and 823 to 825; these read DPF.

In terms of assembly, interacts with the second C2 domain of Syt.

It localises to the cytoplasm. It is found in the synapse. The protein resides in the cytoplasmic vesicle. The protein localises to the secretory vesicle. Its subcellular location is the synaptic vesicle. Its function is as follows. Adapter protein involved in endocytic recycling of synaptic vesicles membranes. May act by mediating the retrieval of synaptotagmin protein Syt from the plasma membrane, thereby facilitating the internalization of multiple synaptic vesicles from the plasma membrane. The chain is Protein stoned-A (stnA) from Drosophila melanogaster (Fruit fly).